A 1052-amino-acid chain; its full sequence is Protein argonaute 14 (1052 aa).

Gly residues predominate over residues 1 to 39 (MASRGGDGLVGGGRGPLGGRDGRGRGPAGGRGGGRGGGH). Disordered regions lie at residues 1–127 (MASR…TPAV) and 170–194 (GGRP…APPS). Residues 40–49 (PQQQQQQQPG) show a composition bias toward low complexity. Composition is skewed to gly residues over residues 50–59 (YGRGDGGGRG) and 66–81 (GVVG…GGRG). Residues 97-117 (VRPAMAAAPAASTPGPVAVAA) show a composition bias toward low complexity. Residues 173 to 183 (PAPPAAPPAPI) show a composition bias toward pro residues. The 117-residue stretch at 394-510 (SVVEYVKNCL…LPMEVCTIVE (117 aa)) folds into the PAZ domain. One can recognise a Piwi domain in the interval 677–1009 (LLIVILPDVN…AAFRARYYDE (333 aa)).

It belongs to the argonaute family. Ago subfamily. As to expression, expressed in seeds.

Its function is as follows. Probably involved in the RNA silencing pathway. May bind to short RNAs such as microRNAs (miRNAs) or short interfering RNAs (siRNAs), and represses the translation of mRNAs which are complementary to them. The sequence is that of Protein argonaute 14 (AGO14) from Oryza sativa subsp. japonica (Rice).